Consider the following 1744-residue polypeptide: MDFGSVMNQAATPCSPAVNYELPSPGQSITKQVDTPDATRSPRGGQAHRKASRSMSVTAAMESSCELDLVYITERIIAVSYPSTAEEQSFRSNLREVAHMLKSKHGDNYVLFNLSERRHDISKLHPKVLDFGWPDLHTPALEKICSICKAMDTWLNAAAHNVVVLHNKGNRGRLGVVVAAYMHYSNISASADQALDRFAMKRFYEDKVVPVGQPSQKRYIHYFSGLLSGSIKMNNKPLFLHHVIMHGIPNFESKGGCRPFLKIYQAMQPVYTSGIYNVQGDSQTGICITIEPGLLLKGDILLKCYHKKFRSPTRDVIFRVQFHTCAVHDLDIVFGKEDLDEAFRDERFPEYGKVEFVFSYGPEKIQGMEHLENGPSVSVDYNTSDPLIRWDSYENFNIQREDSTEGTWAEPALPGKHLEKEVGHTQGPLDGSLYAKVKKKDSLHGSIGAVNAARLPLSAAPNHVEHTLSVSSDSGNSTASTKTDRTDEPGAPGAPTGHAVLSPEEKRELDRLLVGFGLESAPPMHNHAPGPAPARLPAGPGRHVVPAQVHVNGAGTPLLAERETDILDDELPNQDGHSVGSLGTLSSLDGTTTASEAGFHEAPRVGSLSSLPNGPASYNGAEKMLKEGLYEAEPLSNGAYPYSNQNTLMGHHLRDPLAHLRPSASAQEHLAGYPQRQPASTSPAWLQPPVPQPYLYGYDLPSAHRSQSFPAVGTAKYEANLALPQAPARSTSSREAVQRGLNSWQQQGGSRPPSQLHDGGLESHSPSLSSCSPQPSPLQPMPPHSHSMPEFPRAPSRREIEQSIEALDVLMLDLAPSVHKSQSVPSAATRQDKPAAMLSSLSAQPLSGHYAQPTPQVVQPRSFGTSVGTDPLAKAYSPGPLVPAARSTAEPDYTVHEYRETYTPYSYQPVPEPRSYGSAPASILPLSASYSPAGSQQLLVSSPPSPTAPAQSQLPHKGLESYEDLSRSGEEPLNLEGLVAHRVAGVQSREKSPEESTVPARRRTPSDSHYEKSSPEPGSPRSPTVLSPEVVSTIAANPGGRPKEPHLHSYKEAFEEMESASPSSLTSGGVRSPPGLAKTPLSALGLKPHNPADILLHPVGELEGEAGADSEEEPRSYVESVARTATTGRAGNLPAAQPVGLEVPARNGAFGNSFTVPSPVSTSSPIHSVDGASLRSYPSEGSPHGTVTPPHAVAETAYRSPMVSQTPSAHSSYQTSSPSSFQAGTLGSPYASPDYPDGRAGFQPDPQARQQPQVSVVGVHALPGSPRTLHRTVATNTPPSPGFGRRAANPAVASVPGSPGLGRHTVSPHAPPGSPSLARHQMAAVPPGSPMYGYSSPEERRPTLSRQSSASGYQPPSTPSFPVSPAYYPGTSTPHSSSPDSAAYRQGSPTPQPALPEKRRMSAGERSNSLPNYATVNGKASSPLSSGMSSPSSGSAVAFSHTLPDFSKFSMPDISPETRANVKFVQDTSKYWYKPDISREQAIALLKDREPGAFIIRDSHSFRGAYGLAMKVASPPPTVMQQNKKGDITNELVRHFLIETSPRGVKLKGCPNEPNFGCLSALVYQHSIMPLALPCKLVIPDRDPMEEKKDAASTTNSATDLLKQGAACNVLFINSVEMESLTGPQAISKAVAETLVADPTPTATIVHFKVSAQGITLTDNQRKLFFRRHYPLNTVTFCDLDPQERKWTKTDGSGPAKLFGFVARKQGSTTDNVCHLFAELDPDQPAAAIVNFVSRVMLGSGQKR.

The segment at 15–55 is disordered; sequence SPAVNYELPSPGQSITKQVDTPDATRSPRGGQAHRKASRSM. The Phosphatase tensin-type domain occupies 58–230; that stretch reads TAAMESSCEL…HYFSGLLSGS (173 aa). The C2 tensin-type domain maps to 235 to 361; it reads NKPLFLHHVI…GKVEFVFSYG (127 aa). 7 disordered regions span residues 467–505, 569–589, 666–686, 724–797, 934–956, 982–1077, and 1156–1437; these read TLSVSSDSGNSTASTKTDRTDEPGAPGAPTGHAVLSPEE, DELPNQDGHSVGSLGTLSSLD, AQEHLAGYPQRQPASTSPAWL, PQAP…APSR, GSQQLLVSSPPSPTAPAQSQLPH, RVAG…PGLA, and VPSP…GSAV. Residues 468–481 are compositionally biased toward polar residues; sequence LSVSSDSGNSTAST. Low complexity predominate over residues 580–589; it reads GSLGTLSSLD. Residues 728–753 show a composition bias toward polar residues; that stretch reads ARSTSSREAVQRGLNSWQQQGGSRPP. Over residues 763 to 773 the composition is skewed to low complexity; it reads SHSPSLSSCSP. The span at 774-783 shows a compositional bias: pro residues; the sequence is QPSPLQPMPP. Composition is skewed to basic and acidic residues over residues 1004-1014 and 1041-1054; these read TPSDSHYEKSS and RPKEPHLHSYKEAF. Residues 1060-1069 are compositionally biased toward polar residues; that stretch reads ASPSSLTSGG. Low complexity-rich tracts occupy residues 1156-1169 and 1208-1220; these read VPSPVSTSSPIHSV and SAHSSYQTSSPSS. Polar residues-rich tracts occupy residues 1344-1355, 1370-1380, and 1405-1420; these read LSRQSSASGYQP, GTSTPHSSSPD, and ERSNSLPNYATVNGKA. A compositionally biased stretch (low complexity) spans 1421–1435; that stretch reads SSPLSSGMSSPSSGS. In terms of domain architecture, SH2 spans 1472–1581; sequence WYKPDISREQ…ALPCKLVIPD (110 aa). The 137-residue stretch at 1607 to 1743 folds into the PTB domain; that stretch reads ACNVLFINSV…SRVMLGSGQK (137 aa).

Belongs to the PTEN phosphatase protein family. Binds to actin filaments. Interacts with phosphotyrosine-containing proteins. Tyrosine phosphorylated. Heart, gizzard, lung and skeletal muscle.

It is found in the cell surface. Its subcellular location is the cell junction. The protein resides in the focal adhesion. It localises to the cytoplasm. The protein localises to the cytoskeleton. Its function is as follows. May act as a protein phosphatase and/or a lipid phosphatase. Involved in fibrillar adhesion formation. Plays a role in cell polarization and migration. May be involved in cartilage development and in linking signal transduction pathways to the cytoskeleton. This chain is Tensin-1 (TNS1), found in Gallus gallus (Chicken).